The sequence spans 172 residues: Small t antigen (172 aa).

The residue at position 1 (Met1) is an N-acetylmethionine; by host. A J domain is found at 12-75 (ELMDLLGLDR…VKVAHQPDFG (64 aa)). The C4-type; atypical zinc finger occupies 101–114 (CATNPSVHCPCLMC). The H1C3-type; atypical zinc-finger motif lies at 120–141 (HRNRKFLRSSPLVWIDCYCFDC).

As to quaternary structure, interacts with host PPP2R1A; the interaction inhibits PP2A activity. Interacts with agnoprotein; this interaction prevents agnoprotein dephosphorylation by host PP2A. Interacts with host RBL1 and RBL2. Interacts with SMARCA5. Interacts with SDHB.

The protein resides in the host cytoplasm. The protein localises to the host nucleus. In terms of biological role, promotes efficient viral genome replication by modulating several host signaling pathways including transport network, interferon production or cell cycle progression. Inhibits host PP2A phosphatase activity and thereby prevents agnoprotein dephosphorylation. Inactivation of PP2A also results in the transactivation of cyclin A and cyclin D1 promoters. In addition, antagonizes the RIGI-mediated IFN response through interaction with E3 ligase TRIM25 leading to the inhibition of 'Lys-63'-linked ubiquitination of RIGI. Inhibits nucleotide excision repair (NER) pathway which leads to DNA strand breaks during DNA replication and micronuclei formation. The sequence is that of Small t antigen from JC polyomavirus (JCPyV).